A 299-amino-acid chain; its full sequence is Coenzyme PQQ synthesis protein B (299 aa).

This sequence belongs to the PqqB family.

The protein operates within cofactor biosynthesis; pyrroloquinoline quinone biosynthesis. Its function is as follows. May be involved in the transport of PQQ or its precursor to the periplasm. This is Coenzyme PQQ synthesis protein B from Xanthomonas oryzae pv. oryzae (strain MAFF 311018).